The following is a 232-amino-acid chain: Octanoyltransferase (232 aa).

The BPL/LPL catalytic domain occupies 43–231; sequence LPTSNYLLFV…HLTHLFEAEI (189 aa). Substrate contacts are provided by residues 88–95, 160–162, and 173–175; these read RGGDITYH, AMG, and GFA. C191 (acyl-thioester intermediate) is an active-site residue.

The protein belongs to the LipB family.

The protein localises to the cytoplasm. It carries out the reaction octanoyl-[ACP] + L-lysyl-[protein] = N(6)-octanoyl-L-lysyl-[protein] + holo-[ACP] + H(+). It functions in the pathway protein modification; protein lipoylation via endogenous pathway; protein N(6)-(lipoyl)lysine from octanoyl-[acyl-carrier-protein]: step 1/2. Functionally, catalyzes the transfer of endogenously produced octanoic acid from octanoyl-acyl-carrier-protein onto the lipoyl domains of lipoate-dependent enzymes. Lipoyl-ACP can also act as a substrate although octanoyl-ACP is likely to be the physiological substrate. The polypeptide is Octanoyltransferase (Flavobacterium johnsoniae (strain ATCC 17061 / DSM 2064 / JCM 8514 / BCRC 14874 / CCUG 350202 / NBRC 14942 / NCIMB 11054 / UW101) (Cytophaga johnsonae)).